A 371-amino-acid chain; its full sequence is UDP-N-acetylglucosamine--N-acetylmuramyl-(pentapeptide) pyrophosphoryl-undecaprenol N-acetylglucosamine transferase (371 aa).

Residues 15-17 (TGG), Asn126, Arg172, Ser199, Ile256, 275-280 (ALTVSE), and Gln301 contribute to the UDP-N-acetyl-alpha-D-glucosamine site.

The protein belongs to the glycosyltransferase 28 family. MurG subfamily.

The protein localises to the cell inner membrane. It catalyses the reaction di-trans,octa-cis-undecaprenyl diphospho-N-acetyl-alpha-D-muramoyl-L-alanyl-D-glutamyl-meso-2,6-diaminopimeloyl-D-alanyl-D-alanine + UDP-N-acetyl-alpha-D-glucosamine = di-trans,octa-cis-undecaprenyl diphospho-[N-acetyl-alpha-D-glucosaminyl-(1-&gt;4)]-N-acetyl-alpha-D-muramoyl-L-alanyl-D-glutamyl-meso-2,6-diaminopimeloyl-D-alanyl-D-alanine + UDP + H(+). Its pathway is cell wall biogenesis; peptidoglycan biosynthesis. Cell wall formation. Catalyzes the transfer of a GlcNAc subunit on undecaprenyl-pyrophosphoryl-MurNAc-pentapeptide (lipid intermediate I) to form undecaprenyl-pyrophosphoryl-MurNAc-(pentapeptide)GlcNAc (lipid intermediate II). This is UDP-N-acetylglucosamine--N-acetylmuramyl-(pentapeptide) pyrophosphoryl-undecaprenol N-acetylglucosamine transferase from Francisella tularensis subsp. tularensis (strain FSC 198).